Here is a 98-residue protein sequence, read N- to C-terminus: UPF0251 protein Sbal_3699 (98 aa).

Belongs to the UPF0251 family.

The polypeptide is UPF0251 protein Sbal_3699 (Shewanella baltica (strain OS155 / ATCC BAA-1091)).